A 367-amino-acid chain; its full sequence is Alanine racemase (367 aa).

Lys35 acts as the Proton acceptor; specific for D-alanine in catalysis. Lys35 is subject to N6-(pyridoxal phosphate)lysine. Arg130 is a binding site for substrate. Catalysis depends on Tyr256, which acts as the Proton acceptor; specific for L-alanine. Met304 contributes to the substrate binding site.

The protein belongs to the alanine racemase family. Requires pyridoxal 5'-phosphate as cofactor.

It catalyses the reaction L-alanine = D-alanine. The protein operates within amino-acid biosynthesis; D-alanine biosynthesis; D-alanine from L-alanine: step 1/1. Functionally, catalyzes the interconversion of L-alanine and D-alanine. May also act on other amino acids. This Methylibium petroleiphilum (strain ATCC BAA-1232 / LMG 22953 / PM1) protein is Alanine racemase (alr).